We begin with the raw amino-acid sequence, 486 residues long: Vicilin-like seed storage protein At3g22640 (486 aa).

An N-terminal signal peptide occupies residues 1–22 (MAITNKLIITLLLLISIAVVHC). The segment at 34-60 (PPQQGEQEGPRRRPGGGSGEGWEEEST) is disordered. 2 Cupin type-1 domains span residues 64-223 (YHFR…ELLG) and 278-448 (FNLF…KVAE). N168, N316, and N455 each carry an N-linked (GlcNAc...) asparagine glycan.

It belongs to the 7S seed storage protein family. Predominantly expressed in the embryo and endosperm of developing seeds. Also present in seedlings.

Its function is as follows. Seed storage protein. (Microbial infection) Involved in tobacco mosaic virus (TMV) replication. Required for endoplasmic reticulum (ER) aggregations mediated by TMV main replicase (P126) upon viral infection. The protein is Vicilin-like seed storage protein At3g22640 of Arabidopsis thaliana (Mouse-ear cress).